The following is a 240-amino-acid chain: 4-hydroxy-tetrahydrodipicolinate reductase (240 aa).

NAD(+) contacts are provided by residues Ala79 to Thr81 and Ser103 to Met106. The Proton donor/acceptor role is filled by His135. Residue His136 participates in (S)-2,3,4,5-tetrahydrodipicolinate binding. The Proton donor role is filled by Lys139. Residue Gly145–Thr146 coordinates (S)-2,3,4,5-tetrahydrodipicolinate.

It belongs to the DapB family.

It is found in the cytoplasm. The catalysed reaction is (S)-2,3,4,5-tetrahydrodipicolinate + NAD(+) + H2O = (2S,4S)-4-hydroxy-2,3,4,5-tetrahydrodipicolinate + NADH + H(+). The enzyme catalyses (S)-2,3,4,5-tetrahydrodipicolinate + NADP(+) + H2O = (2S,4S)-4-hydroxy-2,3,4,5-tetrahydrodipicolinate + NADPH + H(+). It functions in the pathway amino-acid biosynthesis; L-lysine biosynthesis via DAP pathway; (S)-tetrahydrodipicolinate from L-aspartate: step 4/4. Its function is as follows. Catalyzes the conversion of 4-hydroxy-tetrahydrodipicolinate (HTPA) to tetrahydrodipicolinate. This Staphylococcus aureus (strain MSSA476) protein is 4-hydroxy-tetrahydrodipicolinate reductase.